The following is a 556-amino-acid chain: 2-succinyl-5-enolpyruvyl-6-hydroxy-3-cyclohexene-1-carboxylate synthase (556 aa).

Belongs to the TPP enzyme family. MenD subfamily. Homodimer. It depends on Mg(2+) as a cofactor. Mn(2+) is required as a cofactor. Thiamine diphosphate serves as cofactor.

The enzyme catalyses isochorismate + 2-oxoglutarate + H(+) = 5-enolpyruvoyl-6-hydroxy-2-succinyl-cyclohex-3-ene-1-carboxylate + CO2. It functions in the pathway quinol/quinone metabolism; 1,4-dihydroxy-2-naphthoate biosynthesis; 1,4-dihydroxy-2-naphthoate from chorismate: step 2/7. Its pathway is quinol/quinone metabolism; menaquinone biosynthesis. In terms of biological role, catalyzes the thiamine diphosphate-dependent decarboxylation of 2-oxoglutarate and the subsequent addition of the resulting succinic semialdehyde-thiamine pyrophosphate anion to isochorismate to yield 2-succinyl-5-enolpyruvyl-6-hydroxy-3-cyclohexene-1-carboxylate (SEPHCHC). The polypeptide is 2-succinyl-5-enolpyruvyl-6-hydroxy-3-cyclohexene-1-carboxylate synthase (Escherichia coli O127:H6 (strain E2348/69 / EPEC)).